Here is a 138-residue protein sequence, read N- to C-terminus: Larval cuticle protein 1 (138 aa).

An N-terminal signal peptide occupies residues 1-16 (MFKFVMVFAVLGVAAA). One can recognise a Chitin-binding type R&amp;R domain in the interval 49 to 110 (ADGFDADLLV…PVGAVLPTPP (62 aa)).

In terms of biological role, component of the larval cuticle. In Drosophila miranda (Fruit fly), this protein is Larval cuticle protein 1 (Lcp1).